The following is an 803-amino-acid chain: Isoamylase 1, chloroplastic (803 aa).

Residues 1-54 (MASLPHCLSARPLVVAAAPGRPGPGPGPWLRGGARRRNAAFSAGNAGRRVGLRR) constitute a chloroplast transit peptide. The active-site Nucleophile is the Asp432. Glu488 functions as the Proton donor in the catalytic mechanism.

This sequence belongs to the glycosyl hydrolase 13 family. Forms a homo-pentamer and a hetero-hexamer composed of five ISA1 and one ISA2. Interacts with FLO6/SIP4. Highly expressed in developing endosperm. Expressed at low levels in leaves.

It is found in the plastid. The protein resides in the chloroplast. The catalysed reaction is Hydrolysis of (1-&gt;6)-alpha-D-glucosidic branch linkages in glycogen, amylopectin and their beta-limit dextrins.. It functions in the pathway glycan biosynthesis; starch biosynthesis. Inhibited by copper chloride, mercury chloride, ammonium molybdate and para-chloromercuribenzoate. Starch-debranching enzyme involved in amylopectin biosynthesis in endosperm. Functions by removing excess branches or improper branches that interfere with the formation of double helices of the cluster chains of amylopectin and crystallization of starch. Works as ISA1 homooligomer or together with ISA2 as heterooligomer. The heterooligomer ISA1 and ISA2 possesses higher affinity than the ISA1 homooligomer for various branched polyglucans in vitro, but no marked differences exist in chain preferences for debranching of amylopectin and phytoglycogen between these forms. In Oryza sativa subsp. japonica (Rice), this protein is Isoamylase 1, chloroplastic.